The primary structure comprises 366 residues: CD44 antigen (366 aa).

An N-terminal signal peptide occupies residues 1 to 20 (MDTFWWRAAWGLCLVQLSLA). The Extracellular portion of the chain corresponds to 21-273 (QIDLNITCRY…GPMRKPQIPE (253 aa)). N-linked (GlcNAc...) asparagine glycosylation is present at Asn-25. 3 disulfides stabilise this stretch: Cys-28–Cys-129, Cys-53–Cys-118, and Cys-77–Cys-97. The Link domain maps to 32-120 (GVFHVEKNGR…TSQYDTICFN (89 aa)). Arg-41 contributes to the hyaluronan binding site. N-linked (GlcNAc...) asparagine glycosylation occurs at Asn-57. Residues Arg-78 and Tyr-79 each contribute to the hyaluronan site. Asn-100 carries N-linked (GlcNAc...) asparagine glycosylation. Tyr-105 contacts hyaluronan. 2 N-linked (GlcNAc...) asparagine glycosylation sites follow: Asn-110 and Asn-120. The segment covering 156–165 (TKKGEYRTNP) has biased composition (basic and acidic residues). Residues 156 to 266 (TKKGEYRTNP…HGANTTSGPM (111 aa)) form a disordered region. Positions 184–196 (SSGSPSERSTSGG) are enriched in low complexity. A glycan (O-linked (Xyl...) (chondroitin sulfate) serine) is linked at Ser-185. N-linked (GlcNAc...) asparagine glycosylation occurs at Asn-222. Basic and acidic residues predominate over residues 222-231 (NTSDTRDYGS). The tract at residues 229 to 273 (YGSSHDPSGRSYTTHASESAGHSSGSEEHGANTTSGPMRKPQIPE) is stem. Positions 243 to 252 (HASESAGHSS) are enriched in low complexity. N-linked (GlcNAc...) asparagine glycosylation occurs at Asn-260. The chain crosses the membrane as a helical span at residues 274 to 294 (WLIILASLLALALILAVCIAV). Residues 295–366 (NSRRRCGQKK…LQNVDMKIGV (72 aa)) lie on the Cytoplasmic side of the membrane. A Phosphoserine; by PKC modification is found at Ser-296. Positions 297–315 (RRRCGQKKKLVINNGNGTM) are required for interaction with EZR, MSN and RDX and for co-localization to microvilli. Thr-314 is modified (phosphothreonine). Phosphoserine is present on residues Ser-321 and Ser-330.

As to quaternary structure, interacts with PKN2. Interacts with TIAM1 and TIAM2. Interacts with HA, as well as other glycosaminoglycans, collagen, laminin, and fibronectin via its N-terminal segment. Interacts with UNC119. Interacts with PDPN (via extracellular domain); this interaction is required for PDPN-mediated directional migration and regulation of lamellipodia extension/stabilization during cell spreading and migration. Interacts with RDX, EZR and MSN. Interacts with EGFR. Interacts with CD74; this complex is essential for the MIF-induced signaling cascade that results in B cell survival. In terms of processing, N-glycosylated. Post-translationally, O-glycosylated; contains chondroitin sulfate glycans which can be more or less sulfated. Phosphorylated; activation of PKC results in the dephosphorylation of Ser-330 (constitutive phosphorylation site), and the phosphorylation of Ser-296. Mesenteric lymph node and liver, not in heart.

The protein localises to the cell membrane. It is found in the cell projection. Its subcellular location is the microvillus. It localises to the secreted. Functionally, cell-surface receptor that plays a role in cell-cell interactions, cell adhesion and migration, helping them to sense and respond to changes in the tissue microenvironment. Participates thereby in a wide variety of cellular functions including the activation, recirculation and homing of T-lymphocytes, hematopoiesis, inflammation and response to bacterial infection. Engages, through its ectodomain, extracellular matrix components such as hyaluronan/HA, collagen, growth factors, cytokines or proteases and serves as a platform for signal transduction by assembling, via its cytoplasmic domain, protein complexes containing receptor kinases and membrane proteases. Such effectors include PKN2, the RhoGTPases RAC1 and RHOA, Rho-kinases and phospholipase C that coordinate signaling pathways promoting calcium mobilization and actin-mediated cytoskeleton reorganization essential for cell migration and adhesion. The protein is CD44 antigen (CD44) of Bos taurus (Bovine).